The sequence spans 491 residues: Adenylosuccinate synthetase, chloroplastic (491 aa).

GTP is bound by residues G78–K84 and G106–T108. Residue D79 is the Proton acceptor of the active site. Residues D79 and G106 each contribute to the Mg(2+) site. IMP contacts are provided by residues D79–K82, N104–H107, T196, R210, Q290, T305, and R369. H107 serves as the catalytic Proton donor. A substrate-binding site is contributed by T365–R371. Residues R371, K397–D399, and G480–G482 each bind GTP.

It belongs to the adenylosuccinate synthetase family. Homodimer. The cofactor is Mg(2+).

The protein resides in the plastid. The protein localises to the chloroplast. The enzyme catalyses IMP + L-aspartate + GTP = N(6)-(1,2-dicarboxyethyl)-AMP + GDP + phosphate + 2 H(+). The protein operates within purine metabolism; AMP biosynthesis via de novo pathway; AMP from IMP: step 1/2. In terms of biological role, plays an important role in the de novo pathway and in the salvage pathway of purine nucleotide biosynthesis. Catalyzes the first committed step in the biosynthesis of AMP from IMP. The chain is Adenylosuccinate synthetase, chloroplastic from Populus trichocarpa (Western balsam poplar).